Reading from the N-terminus, the 369-residue chain is Tetraacyldisaccharide 4'-kinase (369 aa).

Residue 68 to 75 (VVGGTGKT) coordinates ATP.

Belongs to the LpxK family.

It carries out the reaction a lipid A disaccharide + ATP = a lipid IVA + ADP + H(+). The protein operates within glycolipid biosynthesis; lipid IV(A) biosynthesis; lipid IV(A) from (3R)-3-hydroxytetradecanoyl-[acyl-carrier-protein] and UDP-N-acetyl-alpha-D-glucosamine: step 6/6. Transfers the gamma-phosphate of ATP to the 4'-position of a tetraacyldisaccharide 1-phosphate intermediate (termed DS-1-P) to form tetraacyldisaccharide 1,4'-bis-phosphate (lipid IVA). The chain is Tetraacyldisaccharide 4'-kinase from Chlamydia muridarum (strain MoPn / Nigg).